A 367-amino-acid chain; its full sequence is Alanine racemase (367 aa).

Residue Lys-40 is the Proton acceptor; specific for D-alanine of the active site. Lys-40 carries the post-translational modification N6-(pyridoxal phosphate)lysine. Arg-136 provides a ligand contact to substrate. The active-site Proton acceptor; specific for L-alanine is the Tyr-263. Met-310 is a substrate binding site.

It belongs to the alanine racemase family. It depends on pyridoxal 5'-phosphate as a cofactor.

It catalyses the reaction L-alanine = D-alanine. It functions in the pathway amino-acid biosynthesis; D-alanine biosynthesis; D-alanine from L-alanine: step 1/1. Functionally, catalyzes the interconversion of L-alanine and D-alanine. May also act on other amino acids. In Lactococcus lactis subsp. lactis (strain IL1403) (Streptococcus lactis), this protein is Alanine racemase (alr).